A 254-amino-acid polypeptide reads, in one-letter code: Small ribosomal subunit protein uS2 (254 aa).

This sequence belongs to the universal ribosomal protein uS2 family.

This is Small ribosomal subunit protein uS2 from Oceanobacillus iheyensis (strain DSM 14371 / CIP 107618 / JCM 11309 / KCTC 3954 / HTE831).